We begin with the raw amino-acid sequence, 389 residues long: MMAIDKPLDFLWFIPSSGDGQYLGSDDLSRPADPGYFREIAKAADRLGYSGVLIPTGAACEESFILAADLAAHTERLKFLVAIRPGTASPAYYARLAATLDRVSNGRLLINIVVGGSAQELAGDGIFLPHDERYDHAGEFFQVFNSLVETGKANLDGKYIKAIDARLGLPPVQEPRPPLYFGGSSDAAIAFSGGITDKYLTWGEPPAQVAEKIAKVRKAAAAQGKHVTFGIRLHFIVRETDEEAWAAADRLISKLSDETIAAAQEVFAKSSDSVGQARMVALHQGRRDKLEVSPNLWAGIGLVRTGAGTALVGSPKTIAERLREYQALGIDTVIASGYPHLEEAYRVSELLFPEIGLPGPHGQIRSSFGERRVFGGGGHGGNVKIASAS.

Belongs to the SsuD family.

The enzyme catalyses an alkanesulfonate + FMNH2 + O2 = an aldehyde + FMN + sulfite + H2O + 2 H(+). Catalyzes the desulfonation of aliphatic sulfonates. This chain is Alkanesulfonate monooxygenase, found in Rhizobium etli (strain CIAT 652).